The sequence spans 136 residues: Aspartate 1-decarboxylase (136 aa).

The Schiff-base intermediate with substrate; via pyruvic acid role is filled by Ser25. Pyruvic acid (Ser) is present on Ser25. Substrate is bound at residue Thr57. Tyr58 (proton donor) is an active-site residue. Residue 73 to 75 (GAA) participates in substrate binding.

This sequence belongs to the PanD family. Heterooctamer of four alpha and four beta subunits. It depends on pyruvate as a cofactor. Is synthesized initially as an inactive proenzyme, which is activated by self-cleavage at a specific serine bond to produce a beta-subunit with a hydroxyl group at its C-terminus and an alpha-subunit with a pyruvoyl group at its N-terminus.

The protein localises to the cytoplasm. It carries out the reaction L-aspartate + H(+) = beta-alanine + CO2. The protein operates within cofactor biosynthesis; (R)-pantothenate biosynthesis; beta-alanine from L-aspartate: step 1/1. In terms of biological role, catalyzes the pyruvoyl-dependent decarboxylation of aspartate to produce beta-alanine. The chain is Aspartate 1-decarboxylase from Corynebacterium efficiens (strain DSM 44549 / YS-314 / AJ 12310 / JCM 11189 / NBRC 100395).